The chain runs to 330 residues: Ketol-acid reductoisomerase (NADP(+)) (330 aa).

Residues 2-182 (ARLYYDTDAN…GGTRAGILET (181 aa)) enclose the KARI N-terminal Rossmann domain. NADP(+) is bound by residues 25–28 (YGSQ), S51, S53, and 83–86 (DEVQ). The active site involves H108. G134 is an NADP(+) binding site. One can recognise a KARI C-terminal knotted domain in the interval 183-328 (TFREETETDL…RELRAMFSWL (146 aa)). The Mg(2+) site is built by D191, E195, E227, and E231. S252 serves as a coordination point for substrate.

The protein belongs to the ketol-acid reductoisomerase family. Mg(2+) serves as cofactor.

It catalyses the reaction (2R)-2,3-dihydroxy-3-methylbutanoate + NADP(+) = (2S)-2-acetolactate + NADPH + H(+). The enzyme catalyses (2R,3R)-2,3-dihydroxy-3-methylpentanoate + NADP(+) = (S)-2-ethyl-2-hydroxy-3-oxobutanoate + NADPH + H(+). It participates in amino-acid biosynthesis; L-isoleucine biosynthesis; L-isoleucine from 2-oxobutanoate: step 2/4. The protein operates within amino-acid biosynthesis; L-valine biosynthesis; L-valine from pyruvate: step 2/4. Functionally, involved in the biosynthesis of branched-chain amino acids (BCAA). Catalyzes an alkyl-migration followed by a ketol-acid reduction of (S)-2-acetolactate (S2AL) to yield (R)-2,3-dihydroxy-isovalerate. In the isomerase reaction, S2AL is rearranged via a Mg-dependent methyl migration to produce 3-hydroxy-3-methyl-2-ketobutyrate (HMKB). In the reductase reaction, this 2-ketoacid undergoes a metal-dependent reduction by NADPH to yield (R)-2,3-dihydroxy-isovalerate. This chain is Ketol-acid reductoisomerase (NADP(+)), found in Synechococcus sp. (strain JA-2-3B'a(2-13)) (Cyanobacteria bacterium Yellowstone B-Prime).